The primary structure comprises 230 residues: Cytidylate kinase (230 aa).

10-18 provides a ligand contact to ATP; the sequence is GFSSTGKST.

The protein belongs to the cytidylate kinase family. Type 1 subfamily.

It localises to the cytoplasm. It carries out the reaction CMP + ATP = CDP + ADP. The enzyme catalyses dCMP + ATP = dCDP + ADP. The protein is Cytidylate kinase of Flavobacterium johnsoniae (strain ATCC 17061 / DSM 2064 / JCM 8514 / BCRC 14874 / CCUG 350202 / NBRC 14942 / NCIMB 11054 / UW101) (Cytophaga johnsonae).